Reading from the N-terminus, the 198-residue chain is Recombination protein RecR (198 aa).

The segment at cysteine 57 to cysteine 72 adopts a C4-type zinc-finger fold. The 96-residue stretch at serine 80 to proline 175 folds into the Toprim domain.

Belongs to the RecR family.

In terms of biological role, may play a role in DNA repair. It seems to be involved in an RecBC-independent recombinational process of DNA repair. It may act with RecF and RecO. The sequence is that of Recombination protein RecR from Bacillus mycoides (strain KBAB4) (Bacillus weihenstephanensis).